A 600-amino-acid polypeptide reads, in one-letter code: Proline--tRNA ligase (600 aa).

Belongs to the class-II aminoacyl-tRNA synthetase family. ProS type 1 subfamily. In terms of assembly, homodimer.

Its subcellular location is the cytoplasm. The enzyme catalyses tRNA(Pro) + L-proline + ATP = L-prolyl-tRNA(Pro) + AMP + diphosphate. Functionally, catalyzes the attachment of proline to tRNA(Pro) in a two-step reaction: proline is first activated by ATP to form Pro-AMP and then transferred to the acceptor end of tRNA(Pro). As ProRS can inadvertently accommodate and process non-cognate amino acids such as alanine and cysteine, to avoid such errors it has two additional distinct editing activities against alanine. One activity is designated as 'pretransfer' editing and involves the tRNA(Pro)-independent hydrolysis of activated Ala-AMP. The other activity is designated 'posttransfer' editing and involves deacylation of mischarged Ala-tRNA(Pro). The misacylated Cys-tRNA(Pro) is not edited by ProRS. This chain is Proline--tRNA ligase, found in Gloeothece citriformis (strain PCC 7424) (Cyanothece sp. (strain PCC 7424)).